The chain runs to 331 residues: Vitamin B12 import system permease protein BtuC (331 aa).

9 helical membrane-spanning segments follow: residues 20–42 (VMLA…FLSP), 62–84 (LVAA…VLLG), 91–113 (GVLG…LPVM), 117–136 (TVFM…ILVG), 148–170 (MLLV…FYFS), 190–209 (SWHH…WLCL), 240–262 (LAIS…VGLV), 277–296 (FLLP…SDIW), and 303–325 (SAEL…WMLI).

Belongs to the binding-protein-dependent transport system permease family. FecCD subfamily. In terms of assembly, the complex is composed of two ATP-binding proteins (BtuD), two transmembrane proteins (BtuC) and a solute-binding protein (BtuF).

The protein localises to the cell inner membrane. In terms of biological role, part of the ABC transporter complex BtuCDF involved in vitamin B12 import. Involved in the translocation of the substrate across the membrane. This chain is Vitamin B12 import system permease protein BtuC, found in Vibrio vulnificus (strain CMCP6).